A 415-amino-acid polypeptide reads, in one-letter code: uncharacterized protein (415 aa).

This is an uncharacterized protein from Methanocaldococcus jannaschii (strain ATCC 43067 / DSM 2661 / JAL-1 / JCM 10045 / NBRC 100440) (Methanococcus jannaschii).